Reading from the N-terminus, the 238-residue chain is Type III pantothenate kinase (238 aa).

ATP is bound at residue 7–14 (DAGNSGLK). Substrate is bound by residues Tyr-88 and 95–98 (GVDR). The active-site Proton acceptor is the Asp-97. Asp-117 contributes to the K(+) binding site. ATP is bound at residue Thr-120. Thr-172 lines the substrate pocket.

This sequence belongs to the type III pantothenate kinase family. Homodimer. NH4(+) is required as a cofactor. The cofactor is K(+).

It is found in the cytoplasm. The enzyme catalyses (R)-pantothenate + ATP = (R)-4'-phosphopantothenate + ADP + H(+). It functions in the pathway cofactor biosynthesis; coenzyme A biosynthesis; CoA from (R)-pantothenate: step 1/5. In terms of biological role, catalyzes the phosphorylation of pantothenate (Pan), the first step in CoA biosynthesis. The chain is Type III pantothenate kinase from Hahella chejuensis (strain KCTC 2396).